Reading from the N-terminus, the 630-residue chain is 1-deoxy-D-xylulose-5-phosphate synthase (630 aa).

Thiamine diphosphate is bound by residues H72 and 113-115 (GHS). D144 contacts Mg(2+). Thiamine diphosphate contacts are provided by residues 145–146 (GA), N173, Y284, and E367. N173 is a Mg(2+) binding site.

It belongs to the transketolase family. DXPS subfamily. In terms of assembly, homodimer. Requires Mg(2+) as cofactor. Thiamine diphosphate is required as a cofactor.

The enzyme catalyses D-glyceraldehyde 3-phosphate + pyruvate + H(+) = 1-deoxy-D-xylulose 5-phosphate + CO2. The protein operates within metabolic intermediate biosynthesis; 1-deoxy-D-xylulose 5-phosphate biosynthesis; 1-deoxy-D-xylulose 5-phosphate from D-glyceraldehyde 3-phosphate and pyruvate: step 1/1. Catalyzes the acyloin condensation reaction between C atoms 2 and 3 of pyruvate and glyceraldehyde 3-phosphate to yield 1-deoxy-D-xylulose-5-phosphate (DXP). The protein is 1-deoxy-D-xylulose-5-phosphate synthase of Bacillus cereus (strain AH820).